The primary structure comprises 408 residues: Interferon-activable protein 203 (408 aa).

Residues 1-87 (MAEYKNIVLL…AKKLKTEKAK (87 aa)) form the Pyrin domain. A disordered region spans residues 84 to 208 (EKAKVQEKKK…EGHHQGPKQV (125 aa)). Over residues 92-102 (KKGKCKTAGKK) the composition is skewed to basic residues. Residues 150 to 159 (AQLPETSGTN) are compositionally biased toward polar residues. One can recognise an HIN-200 domain in the interval 190 to 388 (TVPKEPSREE…SVRHSYMQVI (199 aa)).

The protein belongs to the HIN-200 family. As to expression, constitutively expressed in the thymus, bone marrow and spleen. Isoform 1 and isoform 3 are present in liver (at protein level).

The protein localises to the nucleus. The protein is Interferon-activable protein 203 (Ifi203) of Mus musculus (Mouse).